A 1795-amino-acid chain; its full sequence is Putative surface cell antigen sca2 (1795 aa).

Positions 1-33 (MNLQNSHSKKYVLTFFMSTCLLTSSFLSTSARA) are cleaved as a signal peptide. The span at 360–373 (FLNNNDTTKPSTGR) shows a compositional bias: polar residues. Disordered stretches follow at residues 360 to 391 (FLNNNDTTKPSTGRSQKKSGSKNDHWYMSNQS), 664 to 709 (LEQT…SSNS), and 1354 to 1441 (KQEN…DEEL). The segment covering 672–700 (PNPPPLPLNGGIPNPPPLPLNGSMPPPPL) has biased composition (pro residues). Basic and acidic residues-rich tracts occupy residues 1364–1383 (SSTKDDTQPEDSNKKSEQSD) and 1398–1409 (SKNDKSSDDKKS). Acidic residues predominate over residues 1417 to 1432 (DEDDTGYATDEEELEE). Residues 1516–1795 (ETSINRGVWI…QGLIKLKVNL (280 aa)) enclose the Autotransporter domain.

Its subcellular location is the cell outer membrane. The polypeptide is Putative surface cell antigen sca2 (sca2) (Rickettsia conorii (strain ATCC VR-613 / Malish 7)).